The chain runs to 76 residues: Small ribosomal subunit protein bS16 (76 aa).

This sequence belongs to the bacterial ribosomal protein bS16 family.

This chain is Small ribosomal subunit protein bS16, found in Helicobacter acinonychis (strain Sheeba).